The sequence spans 321 residues: Ras association domain-containing protein 4 (321 aa).

Residues 79–159 form a disordered region; sequence HLPSTSWMPR…RPKCRAPGEA (81 aa). Residues 98 to 110 are compositionally biased toward polar residues; it reads SPQNGNITAQGPS. The residue at position 141 (S141) is a Phosphoserine. The 89-residue stretch at 174–262 folds into the Ras-associating domain; the sequence is YNHKTSVFTP…ARIFLMEADL (89 aa). One can recognise an SARAH domain in the interval 270–317; the sequence is VAQYIKFEMPVLDSFVEKLKEEEEREIIKLTMKFQALRLTMLQRLEQL.

Interacts directly with activated KRAS in a GTP-dependent manner. In terms of tissue distribution, widely expressed. Frequently down-regulated in tumor cell lines.

In terms of biological role, potential tumor suppressor. May act as a KRAS effector protein. May promote apoptosis and cell cycle arrest. The protein is Ras association domain-containing protein 4 (RASSF4) of Homo sapiens (Human).